We begin with the raw amino-acid sequence, 352 residues long: C5a anaphylatoxin chemotactic receptor 1 (352 aa).

The Extracellular segment spans residues 1–38 (MASMNFSPPEYPDYGTATLDPNIFVDESLNTPKLSVPD). Residues Tyr11 and Tyr14 each carry the sulfotyrosine modification. Residues 39 to 65 (MIALVIFVMVFLVGVPGNFLVVWVTGF) traverse the membrane as a helical segment. Residues 66–70 (EVRRT) lie on the Cytoplasmic side of the membrane. Residues 71–94 (INAIWFLNLAVADLLSCLALPILF) form a helical membrane-spanning segment. The Extracellular segment spans residues 95-111 (SSIVQQGYWPFGNAACR). Cys110 and Cys189 are disulfide-bonded. A helical membrane pass occupies residues 112-133 (ILPSLILLNMYASILLLTTISA). Residues 134–154 (DRFVLVFNPIWCQNYRGPQLA) are Cytoplasmic-facing. The helical transmembrane segment at 155–175 (WAACSVAWAVALLLTVPSFIF) threads the bilayer. Residues 176–202 (RGVHTEYFPFWMTCGVDYSGVGVLVER) are Extracellular-facing. The chain crosses the membrane as a helical span at residues 203–228 (GVAILRLLMGFLGPLVILSICYTFLL). The Cytoplasmic segment spans residues 229–244 (IRTWSRKATRSTKTLK). Residues 245 to 267 (VVVAVVVSFFVLWLPYQVTGMMM) traverse the membrane as a helical segment. Over 268 to 284 (ALFYKHSESFRRVSRLD) the chain is Extracellular. Residues 285–305 (SLCVAVAYINCCINPIIYVLA) traverse the membrane as a helical segment. The Cytoplasmic portion of the chain corresponds to 306–352 (AQGFHSRFLKSLPARLRQVLAEESVGRDSKSITLSTVDTPAQKSQGV). Residues Ser316, Ser329, Ser334, Ser336, and Ser340 each carry the phosphoserine modification.

It belongs to the G-protein coupled receptor 1 family. In terms of assembly, homodimer. May also form higher-order oligomers. Interacts (when phosphorylated) with ARRB1 and ARRB2; the interaction is associated with internalization of C5aR. Post-translationally, sulfation plays a critical role in the association of C5aR with C5a, but no significant role in the ability of the receptor to transduce a signal and mobilize calcium in response to a small peptide agonist. In terms of processing, phosphorylated on serine residues in response to C5a binding, resulting in internalization of the receptor and short-term desensitization to C5a.

Its subcellular location is the cell membrane. It is found in the cytoplasmic vesicle. In terms of biological role, receptor for the chemotactic and inflammatory peptide anaphylatoxin C5a. The ligand interacts with at least two sites on the receptor: a high-affinity site on the extracellular N-terminus, and a second site in the transmembrane region which activates downstream signaling events. Receptor activation stimulates chemotaxis, granule enzyme release, intracellular calcium release and superoxide anion production. In Canis lupus familiaris (Dog), this protein is C5a anaphylatoxin chemotactic receptor 1 (C5AR1).